The chain runs to 78 residues: Consomatin Te1 (78 aa).

An N-terminal signal peptide occupies residues 1–22 (MQTAYWMMVMMMVWITAPLSEG). Positions 23 to 56 (GQLNDVIRGLVPDNLAPQLVLQSLDSRRHPHGIR) are excised as a propeptide. C63 and C68 are joined by a disulfide. D-tryptophan is present on W65. 4-hydroxyproline occurs at positions 69, 70, and 72. Residues 74–78 (RRLGS) constitute a propeptide that is removed on maturation.

The protein belongs to the conotoxin C superfamily. Consomatin family. In terms of tissue distribution, expressed by the venom duct.

It localises to the secreted. In terms of biological role, moderately activates human somatostatin receptors (SSTR) with a preferential activation of SSTR1 and SSTR4. In vivo, does not cause behavioral changes in mice within a few minutes of intracranial injection, but causes a progressive loss of movement thereafter. Four to five hours after injection, mice recover, even with the highest dose tested. Shows antinociception and antihyperalgesia activities in two mouse models of acute pain, most probably by acting outside the central nervous system. This is Consomatin Te1 from Conus terebra (Sea snail).